A 132-amino-acid chain; its full sequence is Small ribosomal subunit protein uS8c (132 aa).

This sequence belongs to the universal ribosomal protein uS8 family. As to quaternary structure, part of the 30S ribosomal subunit.

Its subcellular location is the plastid. It localises to the chloroplast. Functionally, one of the primary rRNA binding proteins, it binds directly to 16S rRNA central domain where it helps coordinate assembly of the platform of the 30S subunit. This is Small ribosomal subunit protein uS8c (rps8) from Pinus thunbergii (Japanese black pine).